We begin with the raw amino-acid sequence, 42 residues long: Delta-actitoxin-Ael2d (42 aa).

3 disulfide bridges follow: Cys4–Cys37, Cys6–Cys30, and Cys20–Cys38.

The protein belongs to the sea anemone type 3 (BDS) potassium channel toxin family.

Its subcellular location is the secreted. It localises to the nematocyst. Its function is as follows. Binds to voltage-gated sodium channels (Nav), and slows down the inactivation of mammalian Nav1.2/SCN2A, Nav1.3/SCN3A Nav1.4/SCN4A, Nav1.6/SCN8A, insect DmNav1 and BgNav1 channels, and arachnid VdNav1 channel. This toxin acts by binding to site 3 of sodium channels. In Anthopleura elegantissima (Green aggregating anemone), this protein is Delta-actitoxin-Ael2d.